Consider the following 312-residue polypeptide: Probable N-glycosylase/DNA lyase (312 aa).

Positions 1–22 (MRIPVGDFDLEMTQRSGQTSQP) are disordered. The segment covering 13–22 (TQRSGQTSQP) has biased composition (polar residues). The active site involves Lys235.

The protein belongs to the type-1 OGG1 family.

The catalysed reaction is 2'-deoxyribonucleotide-(2'-deoxyribose 5'-phosphate)-2'-deoxyribonucleotide-DNA = a 3'-end 2'-deoxyribonucleotide-(2,3-dehydro-2,3-deoxyribose 5'-phosphate)-DNA + a 5'-end 5'-phospho-2'-deoxyribonucleoside-DNA + H(+). DNA repair enzyme that incises DNA at 8-oxoG residues. Excises 7,8-dihydro-8-oxoguanine and 2,6-diamino-4-hydroxy-5-N-methylformamidopyrimidine (FAPY) from damaged DNA. Has a beta-lyase activity that nicks DNA 3' to the lesion. This Methanothermobacter thermautotrophicus (strain ATCC 29096 / DSM 1053 / JCM 10044 / NBRC 100330 / Delta H) (Methanobacterium thermoautotrophicum) protein is Probable N-glycosylase/DNA lyase.